Here is a 198-residue protein sequence, read N- to C-terminus: Probable host range protein 2 (198 aa).

A disordered region spans residues 171–198 (SDDDDDNDNADDDEEDDDEVNDIEDDYE).

It belongs to the poxviridae C7 protein family.

In terms of biological role, plays a role for multiplication of the virus in different cell types. This is Probable host range protein 2 from Bos taurus (Bovine).